Here is a 504-residue protein sequence, read N- to C-terminus: Dimethylsulfoniopropionate lyase 5 (504 aa).

It belongs to the aspartate/glutamate racemases family. ALMA1 subfamily. As to quaternary structure, homotetramer.

The catalysed reaction is S,S-dimethyl-beta-propiothetin = acrylate + dimethyl sulfide + H(+). Mediates cleavage of dimethylsulfoniopropionate (DMSP) into dimethyl sulfide (DMS) and acrylate. DMS is the principal form by which sulfur is transported from oceans to the atmosphere and is a key component of the ocean sulfur cycle. This chain is Dimethylsulfoniopropionate lyase 5, found in Emiliania huxleyi (strain CCMP1516).